The following is a 101-amino-acid chain: MKPNFSKGLIPAIVIEEGTKDVLMLAYMNEEAYKKTLETKRTWFYSRSRQSLWNKGETSGNVQYVQSLYLDCDQDSIVVNVKQVGPACHTGEKTCFYYQII.

Asp-71 is a binding site for Mg(2+). Zn(2+) is bound at residue Cys-72. 2 residues coordinate Mg(2+): Asp-73 and Asp-75. Residues Cys-88 and Cys-95 each contribute to the Zn(2+) site.

The protein belongs to the PRA-CH family. In terms of assembly, homodimer. Mg(2+) serves as cofactor. Zn(2+) is required as a cofactor.

It is found in the cytoplasm. It catalyses the reaction 1-(5-phospho-beta-D-ribosyl)-5'-AMP + H2O = 1-(5-phospho-beta-D-ribosyl)-5-[(5-phospho-beta-D-ribosylamino)methylideneamino]imidazole-4-carboxamide. It participates in amino-acid biosynthesis; L-histidine biosynthesis; L-histidine from 5-phospho-alpha-D-ribose 1-diphosphate: step 3/9. Catalyzes the hydrolysis of the adenine ring of phosphoribosyl-AMP. In Bacillus cereus (strain ATCC 14579 / DSM 31 / CCUG 7414 / JCM 2152 / NBRC 15305 / NCIMB 9373 / NCTC 2599 / NRRL B-3711), this protein is Phosphoribosyl-AMP cyclohydrolase.